Consider the following 570-residue polypeptide: Protein mom-5 (570 aa).

The first 16 residues, 1–16 (MHRHILILFLFGCLSA), serve as a signal peptide directing secretion. At 17–230 (DQRLSSTSIS…FDGRVRRILR (214 aa)) the chain is on the extracellular side. In terms of domain architecture, FZ spans 32–148 (STTRKCEHIT…FPVTDLCVGK (117 aa)). 5 cysteine pairs are disulfide-bonded: cysteine 37–cysteine 98, cysteine 45–cysteine 91, cysteine 82–cysteine 119, cysteine 108–cysteine 145, and cysteine 112–cysteine 136. N-linked (GlcNAc...) asparagine glycosylation occurs at asparagine 51. Asparagine 149 carries an N-linked (GlcNAc...) asparagine glycan. Residues 231-251 (IWTAAWSVACFVCSLFTLVTF) form a helical membrane-spanning segment. The Cytoplasmic segment spans residues 252-264 (LVDLSRFAYPVRP). A helical transmembrane segment spans residues 265–285 (ILYLAFCYLAISTVYMIGVVG). Residues 286-319 (EDGFACGTYGSTPTTLVTQGGENVGCSALAVVHY) are Extracellular-facing. Residues 320 to 340 (FFFMSSCAWWLVLCLAWFLAA) form a helical membrane-spanning segment. Residues 341–348 (NLKWGAES) are Cytoplasmic-facing. The chain crosses the membrane as a helical span at residues 349 to 369 (IAALSPYFHAMCWGVPAVLSV). Residues 370–395 (TVLVTNSVDGDVFTGICSVGNLNPSA) are Extracellular-facing. Residues 396–416 (LVYFFFTPIVVSLALGAVLLV) form a helical membrane-spanning segment. Residues 417-449 (CGIWSMIRIRSYIKLQHADVERNISKLEKLMLR) are Cytoplasmic-facing. The helical transmembrane segment at 450 to 470 (IGAFAIMYSLPTAMNAAIMWY) threads the bilayer. Topologically, residues 471-515 (QAVNMPAWLEGWLHHRCVRLQDRELFGFTYPVDDCPMDPKVAAPE) are extracellular. The chain crosses the membrane as a helical span at residues 516-536 (IIVFLLKYVSQLVVGITCAIW). Topologically, residues 537–570 (VVSSKTLSSYHKAYLALSSRSPTVPAHVDQVNMR) are cytoplasmic.

This sequence belongs to the G-protein coupled receptor Fz/Smo family.

Its subcellular location is the cell membrane. The protein localises to the early endosome. In terms of biological role, receptor for Wnt proteins. Most frizzled receptors are coupled to the beta-catenin canonical signaling pathway, which leads to the activation of disheveled proteins, inhibition of gsk-3 kinase, nuclear accumulation of beta-catenin and activation of Wnt target genes. A second signaling pathway involving PKC and calcium fluxes has been seen for some family members, but it is not yet clear if it represents a distinct pathway or if it can be integrated in the canonical pathway, as pkc seems to be required for Wnt-mediated inactivation of gsk-3 kinase. Both pathways seem to involve interactions with G-proteins. Required in embryonic development for the correct positioning and orientation of the mitotic spindles and division planes in blastomere cells. During early embryonic cell divisions, directs the asymmetric positioning of transcription factors such as pop-1 and dsh-2 in daughter cells in order to determine cell fate specification. Acts redundantly with other Wnt receptors such as lin-17 to control vulval precursor cell specification and also the polarity of different cell types including distal tip cells, seam cells, AVG interneurons and P-cells and their descendants. Plays a role in the migration of cell types including distal tip cells and the QR neuroblast descendants, QR.p and QR.pa during larval development. Negatively regulates the unc-6/Netrin receptors unc-5 and unc-40 to control distal tip cell polarity and migration. Acts through ced-5/DOCK180 and ced-10/Rac to control both distal tip cell migration and the phagocytic clearance of apoptotic cell corpses. Furthermore, it is also required for the migration and axon guidance of the different neuronal cell types including CAN, ALM, HSN and the two mechanosensory neurons AVM and PVM. Mediates Wnt receptor cfz-2 in directing ALM migration, but may also act redundantly with the Wnt receptors cfz-2 and mig-1 to direct the migration of other neuronal cell types including CAN and HSN. Mediates Wnt ligand egl-20 in the control of the anterior-posterior axon guidance of AVM and PVM neurons. The protein is Protein mom-5 of Caenorhabditis elegans.